A 287-amino-acid chain; its full sequence is Cell division protein ZipA (287 aa).

Residue M1 is a topological domain, periplasmic. The chain crosses the membrane as a helical span at residues 2–22; that stretch reads EIGLREWLIVIGIIVIAGILF. The Cytoplasmic segment spans residues 23 to 287; it reads DGWRRMRGSK…ERRALTQRRG (265 aa). Residues 48–140 are disordered; that stretch reads DEEETTSAEV…PTQRITEDKD (93 aa). Basic and acidic residues-rich tracts occupy residues 64–77, 85–104, and 121–140; these read LDTHKEPQLDEHDL, REGKRSNSDKRSDKKRKDEP, and GRDDDFPDDKPTQRITEDKD.

It belongs to the ZipA family. As to quaternary structure, interacts with FtsZ via their C-terminal domains.

Its subcellular location is the cell inner membrane. Essential cell division protein that stabilizes the FtsZ protofilaments by cross-linking them and that serves as a cytoplasmic membrane anchor for the Z ring. Also required for the recruitment to the septal ring of downstream cell division proteins. The polypeptide is Cell division protein ZipA (Pseudomonas syringae pv. syringae (strain B728a)).